Reading from the N-terminus, the 608-residue chain is Afamin (608 aa).

A signal peptide spans 1–21 (MRHLKLTGFIFFLLPLTESLA). Albumin domains follow at residues 22–210 (LPTK…APIT), 211–403 (QYLK…KFNE), and 404–599 (TTQR…KTGD). Asparagine 33 is a glycosylation site (N-linked (GlcNAc...) asparagine). 11 cysteine pairs are disulfide-bonded: cysteine 77-cysteine 86, cysteine 99-cysteine 114, cysteine 113-cysteine 124, cysteine 148-cysteine 193, cysteine 192-cysteine 201, cysteine 224-cysteine 270, cysteine 269-cysteine 277, cysteine 289-cysteine 303, cysteine 302-cysteine 313, cysteine 340-cysteine 385, and cysteine 384-cysteine 393. N-linked (GlcNAc...) asparagine glycosylation is present at asparagine 109. An N-linked (GlcNAc...) asparagine glycan is attached at asparagine 153. The tract at residues 215 to 319 (ASSSYQRNVC…REACIINANK (105 aa)) is binding pocket for hydrophobic ligands. N-linked (GlcNAc...) asparagine glycosylation is present at asparagine 402. 5 disulfide bridges follow: cysteine 416–cysteine 462, cysteine 461–cysteine 470, cysteine 483–cysteine 499, cysteine 498–cysteine 509, and cysteine 580–cysteine 589. Asparagine 488 carries N-linked (GlcNAc...) asparagine glycosylation. Residues 583-608 (VQEPESCFSPESSKTGDESQATEKQR) form a disordered region. Over residues 596-608 (KTGDESQATEKQR) the composition is skewed to basic and acidic residues.

This sequence belongs to the ALB/AFP/VDB family. As to quaternary structure, forms a 1:1 complex with Wnt family members; interacts with WNT1, WNT2B, WNT3, WNT5A, WNT7A, WNT7B, WNT8, WNT9A, WNT9B, WNT10A and WNT10B. Interacts with WNT3A. N-glycosylated; more than 90% of the glycans are sialylated. Detected in brain, especially on brain capillaries (at protein level). Expressed in isolated brain capillaries.

It localises to the secreted. Functionally, functions as a carrier for hydrophobic molecules in body fluids. Essential for the solubility and activity of lipidated Wnt family members, including WNT1, WNT2B, WNT3, WNT3A, WNT5A, WNT7A, WNT7B, WNT8, WNT9A, WNT9B, WNT10A and WNT10B. Binds vitamin E. May transport vitamin E in body fluids under conditions where the lipoprotein system is not sufficient. May be involved in the transport of vitamin E across the blood-brain barrier. The polypeptide is Afamin (Afm) (Mus musculus (Mouse)).